The following is a 151-amino-acid chain: Cell division protein SepF (151 aa).

A compositionally biased stretch (acidic residues) spans 17-29 (DNEDDYQDQEDEQ). The interval 17–42 (DNEDDYQDQEDEQAQQPAPEQPVDNH) is disordered.

Belongs to the SepF family. Homodimer. Interacts with FtsZ.

It localises to the cytoplasm. In terms of biological role, cell division protein that is part of the divisome complex and is recruited early to the Z-ring. Probably stimulates Z-ring formation, perhaps through the cross-linking of FtsZ protofilaments. Its function overlaps with FtsA. The sequence is that of Cell division protein SepF from Lacticaseibacillus casei (strain BL23) (Lactobacillus casei).